Consider the following 286-residue polypeptide: Acetyl-coenzyme A carboxylase carboxyl transferase subunit beta (286 aa).

In terms of domain architecture, CoA carboxyltransferase N-terminal spans 28–286; sequence LMQKCSNCKK…KMHMDGRQLK (259 aa). Positions 32, 35, 51, and 54 each coordinate Zn(2+). Residues 32-54 form a C4-type zinc finger; it reads CSNCKKIYYRKEMVKALQVCPNC.

Belongs to the AccD/PCCB family. In terms of assembly, acetyl-CoA carboxylase is a heterohexamer composed of biotin carboxyl carrier protein (AccB), biotin carboxylase (AccC) and two subunits each of ACCase subunit alpha (AccA) and ACCase subunit beta (AccD). Zn(2+) serves as cofactor.

The protein localises to the cytoplasm. It catalyses the reaction N(6)-carboxybiotinyl-L-lysyl-[protein] + acetyl-CoA = N(6)-biotinyl-L-lysyl-[protein] + malonyl-CoA. The protein operates within lipid metabolism; malonyl-CoA biosynthesis; malonyl-CoA from acetyl-CoA: step 1/1. Its function is as follows. Component of the acetyl coenzyme A carboxylase (ACC) complex. Biotin carboxylase (BC) catalyzes the carboxylation of biotin on its carrier protein (BCCP) and then the CO(2) group is transferred by the transcarboxylase to acetyl-CoA to form malonyl-CoA. The polypeptide is Acetyl-coenzyme A carboxylase carboxyl transferase subunit beta (Oceanobacillus iheyensis (strain DSM 14371 / CIP 107618 / JCM 11309 / KCTC 3954 / HTE831)).